The chain runs to 828 residues: Beta-galactosidase (828 aa).

The signal sequence occupies residues 1-20; sequence MKMKQFNLLSLFLILITSFG. Residues Asn23 and Asn153 are each glycosylated (N-linked (GlcNAc...) asparagine). Glu183 serves as the catalytic Proton donor. Glu252 serves as the catalytic Nucleophile. 7 N-linked (GlcNAc...) asparagine glycosylation sites follow: Asn253, Asn350, Asn379, Asn492, Asn667, Asn799, and Asn803. One can recognise an SUEL-type lectin domain in the interval 742 to 828; it reads AHEHNKVELS…PKRLFVEVEC (87 aa).

Belongs to the glycosyl hydrolase 35 family.

The protein resides in the secreted. Its subcellular location is the extracellular space. The protein localises to the apoplast. The enzyme catalyses Hydrolysis of terminal non-reducing beta-D-galactose residues in beta-D-galactosides.. The protein is Beta-galactosidase of Brassica oleracea (Wild cabbage).